A 272-amino-acid chain; its full sequence is MSTGGDRLPEAFLRPGSSSFVEFLREVAPQSHPEHARPAGAGDVVHATTIVALSFAGGIVMAGDRRATMGSFIAHREIEKVFPGDEYSAIGIAGTAGIGVELVRLFQLELEHFEKIEGAMLSLEGKANRLTTLLRGNLGLALQGLAAVPLFGGYDLDRAAGRIFSYDVTGGRYEERNHHSIGSGGMFARGSLKKLWRPGLGDRDAIAVALAALVDAADDDSATGGPDALRGIFPVVATVTAEGYRRIAEGELAGLVAEIDAARAQAREGDTR.

The propeptide at 1–47 (MSTGGDRLPEAFLRPGSSSFVEFLREVAPQSHPEHARPAGAGDVVHA) is removed in mature form; by autocatalysis. The Nucleophile role is filled by T48.

Belongs to the peptidase T1B family. As to quaternary structure, the 20S proteasome core is composed of 14 alpha and 14 beta subunits that assemble into four stacked heptameric rings, resulting in a barrel-shaped structure. The two inner rings, each composed of seven catalytic beta subunits, are sandwiched by two outer rings, each composed of seven alpha subunits. The catalytic chamber with the active sites is on the inside of the barrel. Has a gated structure, the ends of the cylinder being occluded by the N-termini of the alpha-subunits. Is capped by the proteasome-associated ATPase, ARC.

The protein resides in the cytoplasm. It carries out the reaction Cleavage of peptide bonds with very broad specificity.. The protein operates within protein degradation; proteasomal Pup-dependent pathway. The formation of the proteasomal ATPase ARC-20S proteasome complex, likely via the docking of the C-termini of ARC into the intersubunit pockets in the alpha-rings, may trigger opening of the gate for substrate entry. Interconversion between the open-gate and close-gate conformations leads to a dynamic regulation of the 20S proteasome proteolysis activity. Functionally, component of the proteasome core, a large protease complex with broad specificity involved in protein degradation. In Beutenbergia cavernae (strain ATCC BAA-8 / DSM 12333 / CCUG 43141 / JCM 11478 / NBRC 16432 / NCIMB 13614 / HKI 0122), this protein is Proteasome subunit beta.